The following is a 154-amino-acid chain: Transcriptional repressor NrdR (154 aa).

A zinc finger spans residues 3 to 34 (CPHCHKNGSRVVDSRPSEDGSFIRRRRECIHC). The ATP-cone domain maps to 49 to 139 (LLVIKKDGTR…VYRQFKDVDA (91 aa)).

This sequence belongs to the NrdR family. Requires Zn(2+) as cofactor.

Negatively regulates transcription of bacterial ribonucleotide reductase nrd genes and operons by binding to NrdR-boxes. The protein is Transcriptional repressor NrdR of Limosilactobacillus reuteri (strain DSM 20016) (Lactobacillus reuteri).